The sequence spans 438 residues: tRNA modification GTPase MnmE (438 aa).

(6S)-5-formyl-5,6,7,8-tetrahydrofolate contacts are provided by R20, E78, and K117. One can recognise a TrmE-type G domain in the interval 214 to 359 (GIRVLIIGKP…LIDEIKKLFY (146 aa)). N224 is a K(+) binding site. GTP is bound by residues 224 to 229 (NVGKST), 243 to 249 (TDIPGTT), and 268 to 271 (DTAG). Mg(2+) is bound at residue S228. Residues T243, I245, and T248 each coordinate K(+). T249 provides a ligand contact to Mg(2+). Residue K438 coordinates (6S)-5-formyl-5,6,7,8-tetrahydrofolate.

Belongs to the TRAFAC class TrmE-Era-EngA-EngB-Septin-like GTPase superfamily. TrmE GTPase family. Homodimer. Heterotetramer of two MnmE and two MnmG subunits. K(+) serves as cofactor.

It is found in the cytoplasm. Exhibits a very high intrinsic GTPase hydrolysis rate. Involved in the addition of a carboxymethylaminomethyl (cmnm) group at the wobble position (U34) of certain tRNAs, forming tRNA-cmnm(5)s(2)U34. The protein is tRNA modification GTPase MnmE of Ureaplasma parvum serovar 3 (strain ATCC 27815 / 27 / NCTC 11736).